We begin with the raw amino-acid sequence, 343 residues long: Aspartate-semialdehyde dehydrogenase (343 aa).

Residues 20–23 (SGAV) and 48–49 (RS) contribute to the NADP(+) site. R108 provides a ligand contact to phosphate. C137 (acyl-thioester intermediate) is an active-site residue. Residue Q164 coordinates substrate. 167–168 (SG) provides a ligand contact to NADP(+). K221 is a binding site for phosphate. Substrate is bound at residue R243. The Proton acceptor role is filled by H250. Position 323 (Q323) interacts with NADP(+).

It belongs to the aspartate-semialdehyde dehydrogenase family. In terms of assembly, homodimer.

The catalysed reaction is L-aspartate 4-semialdehyde + phosphate + NADP(+) = 4-phospho-L-aspartate + NADPH + H(+). Its pathway is amino-acid biosynthesis; L-lysine biosynthesis via DAP pathway; (S)-tetrahydrodipicolinate from L-aspartate: step 2/4. The protein operates within amino-acid biosynthesis; L-methionine biosynthesis via de novo pathway; L-homoserine from L-aspartate: step 2/3. It functions in the pathway amino-acid biosynthesis; L-threonine biosynthesis; L-threonine from L-aspartate: step 2/5. In terms of biological role, catalyzes the NADPH-dependent formation of L-aspartate-semialdehyde (L-ASA) by the reductive dephosphorylation of L-aspartyl-4-phosphate. This is Aspartate-semialdehyde dehydrogenase from Prochlorococcus marinus (strain SARG / CCMP1375 / SS120).